Reading from the N-terminus, the 321-residue chain is Lipoyl synthase (321 aa).

[4Fe-4S] cluster is bound by residues Cys-68, Cys-73, Cys-79, Cys-94, Cys-98, Cys-101, and Ser-308. One can recognise a Radical SAM core domain in the interval 80–297 (FNHGTATFMI…KELAESIGFT (218 aa)).

The protein belongs to the radical SAM superfamily. Lipoyl synthase family. The cofactor is [4Fe-4S] cluster.

Its subcellular location is the cytoplasm. It catalyses the reaction [[Fe-S] cluster scaffold protein carrying a second [4Fe-4S](2+) cluster] + N(6)-octanoyl-L-lysyl-[protein] + 2 oxidized [2Fe-2S]-[ferredoxin] + 2 S-adenosyl-L-methionine + 4 H(+) = [[Fe-S] cluster scaffold protein] + N(6)-[(R)-dihydrolipoyl]-L-lysyl-[protein] + 4 Fe(3+) + 2 hydrogen sulfide + 2 5'-deoxyadenosine + 2 L-methionine + 2 reduced [2Fe-2S]-[ferredoxin]. It participates in protein modification; protein lipoylation via endogenous pathway; protein N(6)-(lipoyl)lysine from octanoyl-[acyl-carrier-protein]: step 2/2. Catalyzes the radical-mediated insertion of two sulfur atoms into the C-6 and C-8 positions of the octanoyl moiety bound to the lipoyl domains of lipoate-dependent enzymes, thereby converting the octanoylated domains into lipoylated derivatives. The sequence is that of Lipoyl synthase from Shewanella halifaxensis (strain HAW-EB4).